We begin with the raw amino-acid sequence, 91 residues long: Acylphosphatase (91 aa).

The Acylphosphatase-like domain occupies 6 to 91 (CMRCYISGRV…WKDYISFDVL (86 aa)). Catalysis depends on residues arginine 21 and asparagine 39.

Belongs to the acylphosphatase family.

The enzyme catalyses an acyl phosphate + H2O = a carboxylate + phosphate + H(+). In Legionella pneumophila (strain Paris), this protein is Acylphosphatase (acyP).